The sequence spans 382 residues: Guanine nucleotide-binding protein G(s) subunit alpha (382 aa).

Residues 1–14 (MGCFGSPTSKQSDV) show a composition bias toward polar residues. The disordered stretch occupies residues 1–31 (MGCFGSPTSKQSDVNSEDSKSQKRRSDAISR). G2 carries the N-palmitoyl glycine lipid modification. A lipid anchor (S-palmitoyl cysteine) is attached at C3. Basic and acidic residues predominate over residues 17–31 (EDSKSQKRRSDAISR). A G-alpha domain is found at 42-382 (ATHRLLLLGA…RMHLRQYELL (341 aa)). The segment at 45–58 (RLLLLGAGESGKST) is G1 motif. GTP contacts are provided by residues 50–57 (GAGESGKS), 51–58 (AGESGKST), 186–192 (LRCRVLT), 211–215 (DVGGQ), 212–216 (VGGQR), 280–283 (NKQD), 281–284 (KQDL), and A354. Mg(2+) contacts are provided by S57 and T192. The interval 184–192 (DILRCRVLT) is G2 motif. The segment at 207-216 (FHMFDVGGQR) is G3 motif. The segment at 276–283 (ILFLNKQD) is G4 motif. The G5 motif stretch occupies residues 352–357 (TCAVDT).

It belongs to the G-alpha family. G(s) subfamily. G proteins are composed of 3 units; alpha, beta and gamma. The alpha chain contains the guanine nucleotide binding site.

Guanine nucleotide-binding proteins (G proteins) are involved as modulators or transducers in various transmembrane signaling systems. The G(s) protein is involved in hormonal regulation of adenylate cyclase: it activates the cyclase. This Drosophila pseudoobscura pseudoobscura (Fruit fly) protein is Guanine nucleotide-binding protein G(s) subunit alpha (G-salpha60A).